A 382-amino-acid chain; its full sequence is Rubredoxin-NAD(+) reductase (382 aa).

FAD contacts are provided by residues 9-12, 33-34, lysine 42, valine 80, glutamate 156, aspartate 275, valine 287, and lysine 318; these read TGLA and TA.

Belongs to the FAD-dependent oxidoreductase family. As to quaternary structure, homodimer. The cofactor is FAD.

It is found in the cytoplasm. The catalysed reaction is 2 reduced [rubredoxin] + NAD(+) + H(+) = 2 oxidized [rubredoxin] + NADH. It participates in hydrocarbon metabolism; alkane degradation. Its function is as follows. Involved in the hydrocarbon hydroxylating system, which transfers electrons from NADH to rubredoxin reductase and then through rubredoxin to alkane 1 monooxygenase. The polypeptide is Rubredoxin-NAD(+) reductase (rubB) (Alcanivorax borkumensis (strain ATCC 700651 / DSM 11573 / NCIMB 13689 / SK2)).